A 400-amino-acid chain; its full sequence is Elongation factor Tu (400 aa).

Residues 10–208 (KPHLNVGTIG…TMDSYFPEPQ (199 aa)) enclose the tr-type G domain. A G1 region spans residues 19–26 (GHIDHGKT). A GTP-binding site is contributed by 19 to 26 (GHIDHGKT). T26 contributes to the Mg(2+) binding site. Positions 60–64 (GITIN) are G2. The interval 81–84 (DCPG) is G3. GTP-binding positions include 81 to 85 (DCPGH) and 136 to 139 (NKTD). Residues 136 to 139 (NKTD) form a G4 region. A G5 region spans residues 174–176 (SAL).

Belongs to the TRAFAC class translation factor GTPase superfamily. Classic translation factor GTPase family. EF-Tu/EF-1A subfamily. As to quaternary structure, monomer.

It localises to the cytoplasm. The enzyme catalyses GTP + H2O = GDP + phosphate + H(+). Its function is as follows. GTP hydrolase that promotes the GTP-dependent binding of aminoacyl-tRNA to the A-site of ribosomes during protein biosynthesis. In Thermosipho africanus (strain TCF52B), this protein is Elongation factor Tu.